The following is a 259-amino-acid chain: Ribosomal RNA small subunit methyltransferase A (259 aa).

Residues Asn-13, Leu-15, Gly-39, Glu-60, Asp-84, and Asn-101 each coordinate S-adenosyl-L-methionine.

Belongs to the class I-like SAM-binding methyltransferase superfamily. rRNA adenine N(6)-methyltransferase family. RsmA subfamily.

It localises to the cytoplasm. The enzyme catalyses adenosine(1518)/adenosine(1519) in 16S rRNA + 4 S-adenosyl-L-methionine = N(6)-dimethyladenosine(1518)/N(6)-dimethyladenosine(1519) in 16S rRNA + 4 S-adenosyl-L-homocysteine + 4 H(+). Functionally, specifically dimethylates two adjacent adenosines (A1518 and A1519) in the loop of a conserved hairpin near the 3'-end of 16S rRNA in the 30S particle. May play a critical role in biogenesis of 30S subunits. This chain is Ribosomal RNA small subunit methyltransferase A, found in Mesomycoplasma hyopneumoniae (strain 232) (Mycoplasma hyopneumoniae).